Reading from the N-terminus, the 156-residue chain is Ribosome maturation factor RimP (156 aa).

This sequence belongs to the RimP family.

Its subcellular location is the cytoplasm. Required for maturation of 30S ribosomal subunits. This is Ribosome maturation factor RimP from Anoxybacillus flavithermus (strain DSM 21510 / WK1).